A 654-amino-acid polypeptide reads, in one-letter code: tRNA 5-methylaminomethyl-2-thiouridine biosynthesis bifunctional protein MnmC (654 aa).

Residues 1–235 (MSDFQHAQLD…KREMLGGTYQ (235 aa)) form a tRNA (mnm(5)s(2)U34)-methyltransferase region. The interval 261–654 (VGGGLAGCAS…LRDLVRGQRG (394 aa)) is FAD-dependent cmnm(5)s(2)U34 oxidoreductase.

The protein in the N-terminal section; belongs to the methyltransferase superfamily. tRNA (mnm(5)s(2)U34)-methyltransferase family. In the C-terminal section; belongs to the DAO family. FAD is required as a cofactor.

Its subcellular location is the cytoplasm. The catalysed reaction is 5-aminomethyl-2-thiouridine(34) in tRNA + S-adenosyl-L-methionine = 5-methylaminomethyl-2-thiouridine(34) in tRNA + S-adenosyl-L-homocysteine + H(+). In terms of biological role, catalyzes the last two steps in the biosynthesis of 5-methylaminomethyl-2-thiouridine (mnm(5)s(2)U) at the wobble position (U34) in tRNA. Catalyzes the FAD-dependent demodification of cmnm(5)s(2)U34 to nm(5)s(2)U34, followed by the transfer of a methyl group from S-adenosyl-L-methionine to nm(5)s(2)U34, to form mnm(5)s(2)U34. This Pseudomonas paraeruginosa (strain DSM 24068 / PA7) (Pseudomonas aeruginosa (strain PA7)) protein is tRNA 5-methylaminomethyl-2-thiouridine biosynthesis bifunctional protein MnmC.